A 443-amino-acid chain; its full sequence is uncharacterized protein (443 aa).

Catalysis depends on proton acceptor residues H164 and D386.

Belongs to the plant acyltransferase family.

This is an uncharacterized protein from Arabidopsis thaliana (Mouse-ear cress).